We begin with the raw amino-acid sequence, 552 residues long: Putative transport protein HS_1470 (552 aa).

The next 5 membrane-spanning stretches (helical) occupy residues 4–24, 28–48, 67–87, 95–115, and 157–177; these read IAITICILALVAVIGLWIGHW, GVGLGIGGVLFGGIIVAHFMN, LILFVYTIGIQVGPGFFASLL, GLATLIVVLGAVSVFVLYKVV, and MAYAMAYPFGICGILLSMWLI. 2 consecutive RCK C-terminal domains span residues 190 to 275 and 277 to 360; these read KQFQ…VIGE and IDMP…IIGN. The next 6 helical transmembrane spans lie at 370 to 390, 402 to 424, 438 to 458, 463 to 483, 495 to 515, and 529 to 549; these read MLPVFIGIGLGVLLGSIPFYI, AGGPLVVALILARIGSVGKLYWF, IVLFLAVVGLKSGGGFVDTLV, LEWMGYGMFITFIPLMITGII, LCGLLAGSMTDPPALAFANAI, and VYPLSMFLRIMSPQLLAILLW.

It belongs to the AAE transporter (TC 2.A.81) family. YidE subfamily.

Its subcellular location is the cell membrane. The protein is Putative transport protein HS_1470 of Histophilus somni (strain 129Pt) (Haemophilus somnus).